The primary structure comprises 185 residues: Large ribosomal subunit protein uL30 (185 aa).

It belongs to the universal ribosomal protein uL30 family. In terms of assembly, part of the 50S ribosomal subunit.

This is Large ribosomal subunit protein uL30 from Caldivirga maquilingensis (strain ATCC 700844 / DSM 13496 / JCM 10307 / IC-167).